The sequence spans 136 residues: Galectin-7 (136 aa).

Positions 6-136 constitute a Galectin domain; sequence HKTPLPQGVR…DVQLHSVKIF (131 aa). 70 to 76 provides a ligand contact to a beta-D-galactoside; sequence WGREERG.

In terms of assembly, monomer.

It localises to the cytoplasm. Its subcellular location is the nucleus. The protein localises to the secreted. In terms of biological role, could be involved in cell-cell and/or cell-matrix interactions necessary for normal growth control. Pro-apoptotic protein that functions intracellularly upstream of JNK activation and cytochrome c release. This is Galectin-7 (Lgals7) from Rattus norvegicus (Rat).